Here is a 350-residue protein sequence, read N- to C-terminus: S-adenosylmethionine:tRNA ribosyltransferase-isomerase (350 aa).

The protein belongs to the QueA family. Monomer.

It is found in the cytoplasm. It carries out the reaction 7-aminomethyl-7-carbaguanosine(34) in tRNA + S-adenosyl-L-methionine = epoxyqueuosine(34) in tRNA + adenine + L-methionine + 2 H(+). The protein operates within tRNA modification; tRNA-queuosine biosynthesis. Transfers and isomerizes the ribose moiety from AdoMet to the 7-aminomethyl group of 7-deazaguanine (preQ1-tRNA) to give epoxyqueuosine (oQ-tRNA). The sequence is that of S-adenosylmethionine:tRNA ribosyltransferase-isomerase from Saccharophagus degradans (strain 2-40 / ATCC 43961 / DSM 17024).